The chain runs to 821 residues: E3 ubiquitin-protein ligase RSP5 (821 aa).

In terms of domain architecture, C2 spans Met1 to Arg112. Composition is skewed to polar residues over residues Thr133 to Asn144 and Leu188 to Ser201. 2 disordered regions span residues Thr133 to Arg239 and Arg255 to Asp359. Residues Gln202–Gly217 are compositionally biased toward low complexity. The 34-residue stretch at Gly231 to Ala264 folds into the WW 1 domain. Polar residues predominate over residues Arg255–Arg272. A compositionally biased stretch (basic and acidic residues) spans Leu281–Thr296. Positions Gly297–Thr312 are enriched in polar residues. Over residues Ala320 to Gly339 the composition is skewed to low complexity. 2 consecutive WW domains span residues Gly339–Arg372 and Gly399–Leu432. The HECT domain occupies Ser488–Glu821. Residue Cys789 is the Glycyl thioester intermediate of the active site.

The protein belongs to the RSP5/NEDD4 family. Interacts with apyA and creD.

The protein localises to the cytoplasm. It catalyses the reaction S-ubiquitinyl-[E2 ubiquitin-conjugating enzyme]-L-cysteine + [acceptor protein]-L-lysine = [E2 ubiquitin-conjugating enzyme]-L-cysteine + N(6)-ubiquitinyl-[acceptor protein]-L-lysine.. Its pathway is protein modification; protein ubiquitination. Functionally, E3 ubiquitin-protein ligase which accepts ubiquitin from an E2 ubiquitin-conjugating enzyme in the form of a thioester and then directly transfers the ubiquitin to targeted substrates. Probably involved in the regulatory network controlling carbon source utilization. Ubiquitinates 'Lys-528' of the uric acid/xanthine transporter uapA at the cell membrane, leading to its internalization, sorting into the endosomal pathway to the vacuolar lumen where it is eventually degraded. This is E3 ubiquitin-protein ligase RSP5 (hulA) from Emericella nidulans (strain FGSC A4 / ATCC 38163 / CBS 112.46 / NRRL 194 / M139) (Aspergillus nidulans).